The primary structure comprises 146 residues: Hemoglobin subunit beta (146 aa).

V1 is subject to N-acetylvaline. The Globin domain maps to H2–H146. Residue S44 is modified to Phosphoserine. Position 59 is an N6-acetyllysine (K59). H63 contacts heme b. K82 carries the N6-acetyllysine modification. H92 serves as a coordination point for heme b. C93 is modified (S-nitrosocysteine). K144 is subject to N6-acetyllysine.

It belongs to the globin family. In terms of assembly, heterotetramer of two alpha chains and two beta chains. Red blood cells.

Involved in oxygen transport from the lung to the various peripheral tissues. This Macrotus californicus (Californian leaf-nosed bat) protein is Hemoglobin subunit beta (HBB).